We begin with the raw amino-acid sequence, 289 residues long: MNKQQLKAYFMLMRLHRPIPILLILWPTLTALVLASHGLPDISYLVIFTIGVVVMRTVGCIINDIADVDFDKHVARTNTRPLTSGQLSIKNAIWLCISLTLVAFICVLFLNLYTILLSFVALFLAILYPFCKRFFAIPQLILGLAFNFGIFMAFSAIQNQIPVEAWIFYIATICWTIAYDTIYALADREFDLEIGIKSSAVLFGNKVFRYILLFNFLSLLLLIILGIYCDFNSFFYLGVVICSLFFVRNYFLYKKLGITNCINAFSANHWIGLIIFIIAVIQYIIKEFL.

The next 9 membrane-spanning stretches (helical) occupy residues 19-39 (IPILLILWPTLTALVLASHGL), 42-62 (ISYLVIFTIGVVVMRTVGCII), 85-105 (GQLSIKNAIWLCISLTLVAFI), 107-127 (VLFLNLYTILLSFVALFLAIL), 134-154 (FFAIPQLILGLAFNFGIFMAF), 165-185 (AWIFYIATICWTIAYDTIYAL), 211-231 (ILLFNFLSLLLLIILGIYCDF), 233-253 (SFFYLGVVICSLFFVRNYFLY), and 265-285 (FSANHWIGLIIFIIAVIQYII).

It belongs to the UbiA prenyltransferase family. Requires Mg(2+) as cofactor.

Its subcellular location is the cell inner membrane. The catalysed reaction is all-trans-octaprenyl diphosphate + 4-hydroxybenzoate = 4-hydroxy-3-(all-trans-octaprenyl)benzoate + diphosphate. It functions in the pathway cofactor biosynthesis; ubiquinone biosynthesis. Its function is as follows. Catalyzes the prenylation of para-hydroxybenzoate (PHB) with an all-trans polyprenyl group. Mediates the second step in the final reaction sequence of ubiquinone-8 (UQ-8) biosynthesis, which is the condensation of the polyisoprenoid side chain with PHB, generating the first membrane-bound Q intermediate 3-octaprenyl-4-hydroxybenzoate. The sequence is that of 4-hydroxybenzoate octaprenyltransferase from Francisella tularensis subsp. holarctica (strain FTNF002-00 / FTA).